A 287-amino-acid polypeptide reads, in one-letter code: Efem/EfeO family lipoprotein (287 aa).

The signal sequence occupies residues 1–17 (MKKLPTILLASSLLLAA). Cys-18 is lipidated: N-palmitoyl cysteine. Cys-18 is lipidated: S-diacylglycerol cysteine. The tract at residues 20 to 50 (NNSHSDDNSNKDKQSQSSKGENKASLQKATK) is disordered. Basic and acidic residues predominate over residues 23-33 (HSDDNSNKDKQ).

This sequence belongs to the EfeM/EfeO family.

It is found in the cell membrane. In Staphylococcus haemolyticus (strain JCSC1435), this protein is Efem/EfeO family lipoprotein.